Consider the following 931-residue polypeptide: G patch domain-containing protein 1 (931 aa).

Disordered stretches follow at residues 1-41 (MAAR…TVRD), 73-92 (PSTF…LGPE), and 169-209 (QGVG…EDDD). A2 carries the N-acetylalanine modification. S6 and S8 each carry phosphoserine. One can recognise a G-patch domain in the interval 152–198 (KLSVGFELLRKMGWKEGQGVGPRVKRRPRRQKPDPGVKIYGCALPPG). Residue K312 forms a Glycyl lysine isopeptide (Lys-Gly) (interchain with G-Cter in SUMO2) linkage. A phosphoserine mark is found at S357 and S477. Disordered stretches follow at residues 568-595 (RFTH…GDKQ) and 659-931 (LPTT…LRRQ). Basic and acidic residues predominate over residues 582–593 (EVPRDQENDVGD). Positions 659–668 (LPTTQASSEK) are enriched in polar residues. Residues 669–695 (VSQHRGPDKSRKPSRWDTSKHEKKEDS) are compositionally biased toward basic and acidic residues. Position 715 is a phosphoserine (S715). Residues 769 to 780 (SEDEQGDSEDDQ) show a composition bias toward acidic residues. Residues 786–802 (ANFQSSQDTDLGETSSV) show a composition bias toward polar residues. Positions 852 to 888 (EKHKKNKDKHKAKKEHRRKKEKKKKHRKHKHKGKQKN) are enriched in basic residues. The span at 896 to 905 (SSESSDSSDS) shows a compositional bias: low complexity. Positions 922–931 (RLKSLPLRRQ) are enriched in basic residues.

The protein belongs to the GPATCH1 family.

The sequence is that of G patch domain-containing protein 1 (GPATCH1) from Homo sapiens (Human).